The following is a 92-amino-acid chain: Small ribosomal subunit protein uS19c (92 aa).

The protein belongs to the universal ribosomal protein uS19 family.

It localises to the plastid. Its subcellular location is the chloroplast. Functionally, protein S19 forms a complex with S13 that binds strongly to the 16S ribosomal RNA. The sequence is that of Small ribosomal subunit protein uS19c from Oedogonium cardiacum (Filamentous green alga).